Reading from the N-terminus, the 637-residue chain is Chaperone protein HtpG (637 aa).

Residues 1-345 (MSQQETHGFQ…SNDLPLNVSR (345 aa)) form an a; substrate-binding region. The segment at 346 to 562 (EILQDNQVTT…EGEMSTQMIK (217 aa)) is b. The c stretch occupies residues 563 to 637 (LMQAAGQPVP…TNQMLLASVK (75 aa)).

Belongs to the heat shock protein 90 family. As to quaternary structure, homodimer.

The protein resides in the cytoplasm. Molecular chaperone. Has ATPase activity. This is Chaperone protein HtpG from Shewanella frigidimarina (strain NCIMB 400).